Reading from the N-terminus, the 550-residue chain is Probable terpene synthase 2 (550 aa).

Positions 305, 309, and 457 each coordinate Mg(2+). A DDXXD motif motif is present at residues 305 to 309 (DDIYD).

It belongs to the terpene synthase family. Mg(2+) is required as a cofactor.

Its function is as follows. Probable sesquiterpene synthase. The polypeptide is Probable terpene synthase 2 (TPS2) (Ricinus communis (Castor bean)).